The sequence spans 188 residues: Protein GrpE (188 aa).

The protein belongs to the GrpE family. In terms of assembly, homodimer.

It localises to the cytoplasm. In terms of biological role, participates actively in the response to hyperosmotic and heat shock by preventing the aggregation of stress-denatured proteins, in association with DnaK and GrpE. It is the nucleotide exchange factor for DnaK and may function as a thermosensor. Unfolded proteins bind initially to DnaJ; upon interaction with the DnaJ-bound protein, DnaK hydrolyzes its bound ATP, resulting in the formation of a stable complex. GrpE releases ADP from DnaK; ATP binding to DnaK triggers the release of the substrate protein, thus completing the reaction cycle. Several rounds of ATP-dependent interactions between DnaJ, DnaK and GrpE are required for fully efficient folding. In Chromobacterium violaceum (strain ATCC 12472 / DSM 30191 / JCM 1249 / CCUG 213 / NBRC 12614 / NCIMB 9131 / NCTC 9757 / MK), this protein is Protein GrpE.